Reading from the N-terminus, the 290-residue chain is Nitrogenase iron protein 2 (290 aa).

ATP is bound at residue 10–17 (GKGGIGKS). Cysteine 98 contributes to the [4Fe-4S] cluster binding site. At arginine 101 the chain carries ADP-ribosylarginine; by dinitrogenase reductase ADP-ribosyltransferase. Cysteine 133 contributes to the [4Fe-4S] cluster binding site.

Belongs to the NifH/BchL/ChlL family. As to quaternary structure, homodimer. It depends on [4Fe-4S] cluster as a cofactor. In terms of processing, the reversible ADP-ribosylation of Arg-101 inactivates the nitrogenase reductase and regulates nitrogenase activity.

The enzyme catalyses N2 + 8 reduced [2Fe-2S]-[ferredoxin] + 16 ATP + 16 H2O = H2 + 8 oxidized [2Fe-2S]-[ferredoxin] + 2 NH4(+) + 16 ADP + 16 phosphate + 6 H(+). The key enzymatic reactions in nitrogen fixation are catalyzed by the nitrogenase complex, which has 2 components: the iron protein (component 2) and a component 1 which is either a molybdenum-iron protein, a vanadium-iron, or an iron-iron protein. The sequence is that of Nitrogenase iron protein 2 (vnfH) from Azotobacter vinelandii.